We begin with the raw amino-acid sequence, 103 residues long: Small ribosomal subunit protein uS10 (103 aa).

The protein belongs to the universal ribosomal protein uS10 family. As to quaternary structure, part of the 30S ribosomal subunit.

In terms of biological role, involved in the binding of tRNA to the ribosomes. In Shewanella halifaxensis (strain HAW-EB4), this protein is Small ribosomal subunit protein uS10.